The following is a 227-amino-acid chain: Phosphoglycolate phosphatase (227 aa).

Asp8 acts as the Nucleophile in catalysis. Positions 8 and 10 each coordinate Mg(2+). Residue Lys150 coordinates substrate. Residues Asp173 and Asp177 each coordinate Mg(2+).

The protein belongs to the archaeal SPP-like hydrolase family. Mg(2+) serves as cofactor.

The catalysed reaction is 2-phosphoglycolate + H2O = glycolate + phosphate. Catalyzes the dephosphorylation of 2-phosphoglycolate. This is Phosphoglycolate phosphatase from Sulfolobus acidocaldarius (strain ATCC 33909 / DSM 639 / JCM 8929 / NBRC 15157 / NCIMB 11770).